We begin with the raw amino-acid sequence, 2073 residues long: Dedicator of cytokinesis protein 11 (2073 aa).

Serine 12 is subject to Phosphoserine. Threonine 16 carries the post-translational modification Phosphothreonine. Phosphoserine occurs at positions 23 and 161. The 108-residue stretch at 165–272 (GVIKQGWLHK…WLIMLKKIIQ (108 aa)) folds into the PH domain. The residue at position 248 (tyrosine 248) is a Phosphotyrosine. Phosphoserine occurs at positions 306 and 445. Positions 640–818 (KNHLYVYPLQ…PLLKIKTHLE (179 aa)) constitute a C2 DOCK-type domain. The disordered stretch occupies residues 1227 to 1267 (QNGHGIKREDSRGSLIPEGATGFPDPGSTSENTRQSSSRSS). 2 positions are modified to phosphoserine: serine 1237 and serine 1240. Over residues 1254–1267 (STSENTRQSSSRSS) the composition is skewed to low complexity. The region spanning 1609 to 2036 (KSYASTPELR…LSDIIHEQIL (428 aa)) is the DOCKER domain.

The protein belongs to the DOCK family. Interacts with CDC42. As to expression, expressed in spleen, thymus, mesenteric lymph nodes (MLN), bone marrow and peripheral blood lymphocytes. Enriched in B-cells from germinal centers. Expressed in B-, T- and dendritic cells as well as Purkinje cells.

Functionally, guanine nucleotide-exchange factor (GEF) that activates CDC42 by exchanging bound GDP for free GTP. Required for marginal zone (MZ) B-cell development, is associated with early bone marrow B-cell development, MZ B-cell formation, MZ B-cell number and marginal metallophilic macrophages morphology. Facilitates filopodia formation through the activation of CDC42. In Mus musculus (Mouse), this protein is Dedicator of cytokinesis protein 11.